The sequence spans 151 residues: Deoxyuridine 5'-triphosphate nucleotidohydrolase (151 aa).

Residues 70 to 72 (RSG), asparagine 83, 87 to 89 (LID), and methionine 97 each bind substrate.

Belongs to the dUTPase family. Mg(2+) serves as cofactor.

The enzyme catalyses dUTP + H2O = dUMP + diphosphate + H(+). It functions in the pathway pyrimidine metabolism; dUMP biosynthesis; dUMP from dCTP (dUTP route): step 2/2. This enzyme is involved in nucleotide metabolism: it produces dUMP, the immediate precursor of thymidine nucleotides and it decreases the intracellular concentration of dUTP so that uracil cannot be incorporated into DNA. The polypeptide is Deoxyuridine 5'-triphosphate nucleotidohydrolase (Shigella sonnei (strain Ss046)).